The following is a 714-amino-acid chain: Glutamine-dependent NAD(+) synthetase (714 aa).

One can recognise a CN hydrolase domain in the interval 5 to 275; the sequence is ITLATCNLNQ…VEVVTATVDL (271 aa). Glu45 (proton acceptor; for glutaminase activity) is an active-site residue. Catalysis depends on Lys114, which acts as the For glutaminase activity. Cys175 acts as the Nucleophile; for glutaminase activity in catalysis. The segment at 329–714 is ligase; that stretch reads YHSPEEEIAL…GSTLDIMSID (386 aa). 359–366 is a binding site for ATP; that stretch reads PLSGGIDS. Residue Ser361 is part of the active site.

It in the C-terminal section; belongs to the NAD synthetase family.

The enzyme catalyses deamido-NAD(+) + L-glutamine + ATP + H2O = L-glutamate + AMP + diphosphate + NAD(+) + H(+). It participates in cofactor biosynthesis; NAD(+) biosynthesis; NAD(+) from deamido-NAD(+) (L-Gln route): step 1/1. The protein is Glutamine-dependent NAD(+) synthetase (QNS1) of Saccharomyces cerevisiae (strain ATCC 204508 / S288c) (Baker's yeast).